The following is a 920-amino-acid chain: Dynamin-B (920 aa).

Residues 65–84 (NSNNNNNNNNNNKINKNNNN) form a disordered region. In terms of domain architecture, Dynamin-type G spans 154–448 (EITLPQIIVV…LTKHIRDTFP (295 aa)). Residues 164–171 (GSQSSGKS) are G1 motif. 164 to 172 (GSQSSGKSS) serves as a coordination point for GTP. The interval 190–192 (VTR) is G2 motif. The disordered stretch occupies residues 204–241 (TTSRNNVNENEDEDEDDNYYDNDNDDNSLEEWGEFGHT). The span at 212 to 236 (ENEDEDEDDNYYDNDNDDNSLEEWG) shows a compositional bias: acidic residues. Residues 290–293 (DLPG) form a G3 motif region. Residues 359–362 (TKLD) are G4 motif. Residues 359 to 365 (TKLDLMD) and 390 to 393 (NRSQ) each bind GTP. The interval 389–392 (VNRS) is G5 motif. The interval 680 to 790 (FQSTSSTSSS…EIQIQQQQQQ (111 aa)) is disordered. 2 stretches are compositionally biased toward low complexity: residues 681–705 (QSTS…NSNP) and 724–751 (QIKQ…QKQQ). A coiled-coil region spans residues 724 to 751 (QIKQQQQQQQQQQQQSYQQQQQQQQKQQ). The segment covering 765-774 (PPSPPSPPQP) has biased composition (pro residues). The span at 775 to 790 (KQQQSHEIQIQQQQQQ) shows a compositional bias: low complexity. The GED domain maps to 825-916 (IYLLRRLLLA…SLSQSENSDL (92 aa)).

Belongs to the TRAFAC class dynamin-like GTPase superfamily. Dynamin/Fzo/YdjA family.

The protein resides in the cytoplasm. In terms of biological role, enzyme hydrolyzing GTP. The protein is Dynamin-B (dymB) of Dictyostelium discoideum (Social amoeba).